Consider the following 101-residue polypeptide: Small ribosomal subunit protein uS14 (101 aa).

Belongs to the universal ribosomal protein uS14 family. In terms of assembly, part of the 30S ribosomal subunit. Contacts proteins S3 and S10.

In terms of biological role, binds 16S rRNA, required for the assembly of 30S particles and may also be responsible for determining the conformation of the 16S rRNA at the A site. In Neisseria meningitidis serogroup C / serotype 2a (strain ATCC 700532 / DSM 15464 / FAM18), this protein is Small ribosomal subunit protein uS14.